Here is a 239-residue protein sequence, read N- to C-terminus: Mannose-binding protein A (239 aa).

The first 18 residues, 1–18 (MLLLPLLPVLLCVVSVSS), serve as a signal peptide directing secretion. Positions 35–88 (ACGRDGRDGPKGEKGEPGQGLRGLQGPPGKLGPPGSVGSPGSPGPKGQKGDHGD) are disordered. A Collagen-like domain is found at 37–89 (GRDGRDGPKGEKGEPGQGLRGLQGPPGKLGPPGSVGSPGSPGPKGQKGDHGDN). Basic and acidic residues predominate over residues 38–50 (RDGRDGPKGEKGE). P44 carries the 4-hydroxyproline modification. 5-hydroxylysine is present on residues K45 and K48. O-linked (Gal...) hydroxylysine glycans are attached at residues K45 and K48. 4-hydroxyproline occurs at positions 51, 62, 68, 74, and 79. Over residues 58-74 (LQGPPGKLGPPGSVGSP) the composition is skewed to low complexity. K80 and K83 each carry 5-hydroxylysine. 2 O-linked (Gal...) hydroxylysine glycosylation sites follow: K80 and K83. Positions 144-239 (SLCTELQGTV…SFKAVCEFPA (96 aa)) constitute a C-type lectin domain. Intrachain disulfides connect C146-C235 and C213-C227. Positions 179, 183, 203, 205, 211, 212, 223, and 224 each coordinate Ca(2+). Residues 203 to 211 (EPNNHGSGE) form a calcium-dependent carbohydrate binding region.

In terms of assembly, homotrimer. Forms higher oligomeric complexes formed by the association of two, three or more homotrimers. Oligomerization occurs in the endoplasmic reticulum. Interacts with MASP1 and MASP2. Hydroxylated on lysine and proline residues within the collagen-like domain. In terms of processing, O-glycosylated. O-linked glycans on hydroxylysine residues consist of Glc-Gal disaccharides bound to the oxygen atom of post-translationally added hydroxyl groups. As to expression, detected in liver and blood serum (at protein level). Detected in liver.

Its subcellular location is the secreted. Its function is as follows. Calcium-dependent lectin. Plays a role in the innate immune response by binding mannose, fucose and N-acetylglucosamine moieties on different microorganisms and mediating activation of the lectin complement pathway. Binds to late apoptotic cells, as well as to apoptotic blebs and to necrotic cells, but not to early apoptotic cells, facilitating their uptake by macrophages. The sequence is that of Mannose-binding protein A (Mbl1) from Mus musculus (Mouse).